The chain runs to 297 residues: uncharacterized protein (297 aa).

Residues 46–229 (LGAGGPPPPP…RPPPYIAPPP (184 aa)) are disordered. Over residues 65-81 (PEGPGGPPQHAPPNPPP) the composition is skewed to pro residues. Residues 90–100 (RGGGAGGAGDG) are compositionally biased toward gly residues. A compositionally biased stretch (acidic residues) spans 106–117 (DAAEEYGPEDLD). The segment covering 137–151 (HQTRGPGRRAKKRLR) has biased composition (basic residues). Low complexity predominate over residues 184–201 (ATPQAAPAAKTTPASPQT). A compositionally biased stretch (pro residues) spans 219–229 (HRPPPYIAPPP).

This is an uncharacterized protein from Torque teno virus (isolate Human/China/CT23F/2001) (TTV).